A 164-amino-acid chain; its full sequence is Putative 4-hydroxy-4-methyl-2-oxoglutarate aldolase (164 aa).

Residues 75–78 and arginine 97 each bind substrate; that span reads GDML. Aspartate 98 is an a divalent metal cation binding site.

It belongs to the class II aldolase/RraA-like family. In terms of assembly, homotrimer. Requires a divalent metal cation as cofactor.

The catalysed reaction is 4-hydroxy-4-methyl-2-oxoglutarate = 2 pyruvate. It catalyses the reaction oxaloacetate + H(+) = pyruvate + CO2. Its function is as follows. Catalyzes the aldol cleavage of 4-hydroxy-4-methyl-2-oxoglutarate (HMG) into 2 molecules of pyruvate. Also contains a secondary oxaloacetate (OAA) decarboxylase activity due to the common pyruvate enolate transition state formed following C-C bond cleavage in the retro-aldol and decarboxylation reactions. This is Putative 4-hydroxy-4-methyl-2-oxoglutarate aldolase from Hahella chejuensis (strain KCTC 2396).